A 397-amino-acid chain; its full sequence is MAGYEYVSPEQLAGFDKYKYSAVDTNPLSLYVMHPFWNTIVKVFPTWLAPNLITFSGFLLVVFNFLLMAYFDPDFYASAPGHKHVPDWVWIVVGILNFVAYTLDGVDGKQARRTNSSTPLGELFDHGLDSWSCVYFVVTVYSIFGRGSTGVSVFVLYLLLWVVLFSFILSHWEKYNTGILFLPWGYDISQVTISFVYIVTAVVGVEAWYEPFLFNFLYRDLFTAMIIGCALCVTLPMSLLNFFRSYKNNTLKLNSVYEAMVPLFSPCLLFILSTAWILWSPSDILELHPRVFYFMVGTAFANSTCQLIVCQMSSTRCPTLNWLLVPLFLVVLVVNLGVASYVESILLYTLTTAFTLAHIHYGVRVVKQLSSHFQIYPFSLRKPNSDULGMEEKNIGL.

At Ala2 the chain carries N-acetylalanine. Helical transmembrane passes span 47–69 (WLAP…LLMA), 84–103 (HVPD…AYTL), 123–145 (LFDH…SIFG), 150–172 (GVSV…LSHW), 179–201 (ILFL…IVTA), 221–243 (LFTA…LNFF), 256–278 (VYEA…AWIL), 291–310 (VFYF…LIVC), 317–339 (CPTL…LGVA), and 344–366 (SILL…VRVV). Position 387 (Sec387) is a non-standard amino acid, selenocysteine.

Belongs to the CDP-alcohol phosphatidyltransferase class-I family. Mg(2+) is required as a cofactor. The cofactor is Mn(2+). As to expression, widely expressed. Abundant in brain, placenta, liver and pancreas, followed by heart, skeletal muscle, lung and kidney. In brain it is strongly expressed in cerebellum, followed by the occipital pole and the frontal lobe.

The protein resides in the endoplasmic reticulum membrane. The enzyme catalyses CDP-ethanolamine + a 1,2-diacyl-sn-glycerol = a 1,2-diacyl-sn-glycero-3-phosphoethanolamine + CMP + H(+). It catalyses the reaction 1-O-alkyl-2-acyl-sn-glycerol + CDP-ethanolamine = a 1-O-alkyl-2-acyl-sn-glycero-3-phosphoethanolamine + CMP + H(+). It functions in the pathway phospholipid metabolism; phosphatidylethanolamine biosynthesis; phosphatidylethanolamine from ethanolamine: step 3/3. Its function is as follows. Ethanolaminephosphotransferase that catalyzes the transfer of phosphoethanolamine (PE) from CDP-ethanolamine to lipid acceptors, the final step in the synthesis of PE via the 'Kennedy' pathway. PE is the second most abundant phospholipid of membranes in mammals and is involved in various membrane-related cellular processes. The enzyme is critical for the synthesis of several PE species and also catalyzes the synthesis of plasmanyl-PE, a lipid required for proper myelination and neurodevelopment, from 1-alkyl-2-acylglycerol. The polypeptide is Ethanolaminephosphotransferase 1 (Homo sapiens (Human)).